The chain runs to 632 residues: DNA gyrase subunit B (632 aa).

The Toprim domain maps to 419-533; sequence RELFIVEGES…SGYLYIAQPP (115 aa). Residues Glu-425, Asp-498, and Asp-500 each coordinate Mg(2+).

The protein belongs to the type II topoisomerase GyrB family. In terms of assembly, heterotetramer, composed of two GyrA and two GyrB chains. In the heterotetramer, GyrA contains the active site tyrosine that forms a transient covalent intermediate with DNA, while GyrB binds cofactors and catalyzes ATP hydrolysis. It depends on Mg(2+) as a cofactor. Mn(2+) serves as cofactor. The cofactor is Ca(2+).

Its subcellular location is the cytoplasm. The enzyme catalyses ATP-dependent breakage, passage and rejoining of double-stranded DNA.. A type II topoisomerase that negatively supercoils closed circular double-stranded (ds) DNA in an ATP-dependent manner to modulate DNA topology and maintain chromosomes in an underwound state. Negative supercoiling favors strand separation, and DNA replication, transcription, recombination and repair, all of which involve strand separation. Also able to catalyze the interconversion of other topological isomers of dsDNA rings, including catenanes and knotted rings. Type II topoisomerases break and join 2 DNA strands simultaneously in an ATP-dependent manner. The chain is DNA gyrase subunit B from Archaeoglobus fulgidus (strain ATCC 49558 / DSM 4304 / JCM 9628 / NBRC 100126 / VC-16).